The sequence spans 331 residues: Vitamin B12 import system permease protein BtuC (331 aa).

Helical transmembrane passes span 18–38, 64–84, 91–111, 114–134, 149–169, 194–214, 243–263, 277–297, and 305–325; these read WLFG…CAGE, LAVL…QALF, PGLL…VLLG, VLPG…ITFI, LLAG…AVYF, LWLM…SQPL, GWMV…GLVI, VLLP…DIIA, and ELPI…WLLL.

The protein belongs to the binding-protein-dependent transport system permease family. FecCD subfamily. In terms of assembly, the complex is composed of two ATP-binding proteins (BtuD), two transmembrane proteins (BtuC) and a solute-binding protein (BtuF).

It is found in the cell inner membrane. Part of the ABC transporter complex BtuCDF involved in vitamin B12 import. Involved in the translocation of the substrate across the membrane. This chain is Vitamin B12 import system permease protein BtuC, found in Klebsiella pneumoniae subsp. pneumoniae (strain ATCC 700721 / MGH 78578).